Here is a 190-residue protein sequence, read N- to C-terminus: Bifunctional protein PyrR (190 aa).

The short motif at 112-124 (VILVDDVLYSGRS) is the PRPP-binding element.

This sequence belongs to the purine/pyrimidine phosphoribosyltransferase family. PyrR subfamily.

The enzyme catalyses UMP + diphosphate = 5-phospho-alpha-D-ribose 1-diphosphate + uracil. Regulates the transcription of the pyrimidine nucleotide (pyr) operon in response to exogenous pyrimidines. Functionally, also displays a weak uracil phosphoribosyltransferase activity which is not physiologically significant. The sequence is that of Bifunctional protein PyrR from Mycolicibacterium paratuberculosis (strain ATCC BAA-968 / K-10) (Mycobacterium paratuberculosis).